We begin with the raw amino-acid sequence, 327 residues long: MFDAAPIKKVSVVIPVYNEQESLPELIRRTTTACESLGKAWEILLIDDGSSDSSAELMVKASQEADSHIISILLNRNYGQHAAIMAGFSHVSGDLIITLDADLQNPPEEIPRLVAKADEGFDVVGTVRQNRQDSLFRKSASKIINLLIQRTTGKAMGDYGCMLRAYRRPIIDTMLRCHERSTFIPILANIFARRATEIPVHHAEREFGDSKYSFMRLINLMYDLVTCLTTTPLRLLSLLGSVIAIGGFSLSVLLIVLRLALGPQWAAEGVFMLFAVLFTFIGAQFIGMGLLGEYIGRIYNDVRARPRYFVQQVIYPESTSFTEESHQ.

Residues 1–235 (MFDAAPIKKV…TCLTTTPLRL (235 aa)) are Cytoplasmic-facing. Residues 236–256 (LSLLGSVIAIGGFSLSVLLIV) traverse the membrane as a helical segment. Residues 257 to 269 (LRLALGPQWAAEG) lie on the Periplasmic side of the membrane. Residues 270 to 290 (VFMLFAVLFTFIGAQFIGMGL) traverse the membrane as a helical segment. The Cytoplasmic portion of the chain corresponds to 291–327 (LGEYIGRIYNDVRARPRYFVQQVIYPESTSFTEESHQ).

This sequence belongs to the glycosyltransferase 2 family.

Its subcellular location is the cell inner membrane. The catalysed reaction is UDP-4-deoxy-4-formamido-beta-L-arabinose + di-trans,octa-cis-undecaprenyl phosphate = 4-deoxy-4-formamido-alpha-L-arabinopyranosyl di-trans,octa-cis-undecaprenyl phosphate + UDP. The protein operates within glycolipid biosynthesis; 4-amino-4-deoxy-alpha-L-arabinose undecaprenyl phosphate biosynthesis; 4-amino-4-deoxy-alpha-L-arabinose undecaprenyl phosphate from UDP-4-deoxy-4-formamido-beta-L-arabinose and undecaprenyl phosphate: step 1/2. Its pathway is bacterial outer membrane biogenesis; lipopolysaccharide biosynthesis. Functionally, catalyzes the transfer of 4-deoxy-4-formamido-L-arabinose from UDP to undecaprenyl phosphate. The modified arabinose is attached to lipid A and is required for resistance to polymyxin and cationic antimicrobial peptides. This Salmonella newport (strain SL254) protein is Undecaprenyl-phosphate 4-deoxy-4-formamido-L-arabinose transferase.